The following is a 457-amino-acid chain: Metal tolerance protein C4 (457 aa).

At Met1–Arg115 the chain is on the cytoplasmic side. The chain crosses the membrane as a helical span at residues Ala116–Trp136. At Thr137 to His141 the chain is on the vacuolar side. A helical membrane pass occupies residues Val142 to Tyr162. Residues Gly163 to Arg183 are Cytoplasmic-facing. The chain crosses the membrane as a helical span at residues Phe184–Val204. Topologically, residues Asn205–Glu220 are vacuolar. A helical membrane pass occupies residues Leu221–Ile241. Topologically, residues Gln242 to Ser267 are cytoplasmic. A helical transmembrane segment spans residues Val268–Leu288. The Vacuolar segment spans residues Val289–Pro297. The helical transmembrane segment at Ile298–Leu318 threads the bilayer. Topologically, residues Ile319–Leu457 are cytoplasmic.

Belongs to the cation diffusion facilitator (CDF) transporter (TC 2.A.4) family.

It localises to the vacuole membrane. Involved in sequestration of excess metal in the cytoplasm into vacuoles to maintain metal homeostasis. This chain is Metal tolerance protein C4 (MTPC4), found in Arabidopsis thaliana (Mouse-ear cress).